We begin with the raw amino-acid sequence, 285 residues long: Putative cysteine-rich repeat secretory protein 14 (285 aa).

Positions 1–30 are cleaved as a signal peptide; the sequence is MSSFCLSKHLILVPILVMMAQLLLIRNVLS. 2 consecutive Gnk2-homologous domains span residues 37–143 and 161–273; these read YLYH…SIST and RPNA…RYPF.

Belongs to the cysteine-rich repeat secretory protein family.

The protein localises to the secreted. This chain is Putative cysteine-rich repeat secretory protein 14 (CRRSP14), found in Arabidopsis thaliana (Mouse-ear cress).